The primary structure comprises 445 residues: Protein cereblon (445 aa).

The interval 1–48 is disordered; that stretch reads MAGEGDQQDAAHNMGNHLPLLPADSEDEDDEIEMEVEDQDSKEARKPN. The segment covering 24–38 has biased composition (acidic residues); the sequence is DSEDEDDEIEMEVED. Serine 25 is modified (phosphoserine). Positions 84–322 constitute a Lon N-terminal domain; the sequence is IPVLPEVLMI…CELDIMNKCT (239 aa). A CULT domain is found at 321–429; the sequence is CTSLCCKQCQ…LTRSALLPTI (109 aa). Zn(2+) contacts are provided by cysteine 326 and cysteine 329. Residues histidine 381, tryptophan 383, and tryptophan 389 each coordinate (S)-thalidomide. Zn(2+)-binding residues include cysteine 394 and cysteine 397.

It belongs to the CRBN family. Component of a DCX (DDB1-CUL4-X-box) protein ligase complex, at least composed of CRBN, CUL4A, DDB1 and RBX1. Interacts directly with DDB1. Interacts with KCNT1. Interacts with ILF2. Interacts with TRAF6 and ECSIT. Post-translationally, ubiquitinated, ubiquitination is mediated by its own DCX protein ligase complex. As to expression, highly expressed in brain.

It is found in the cytoplasm. Its subcellular location is the nucleus. The protein resides in the membrane. The protein operates within protein modification; protein ubiquitination. Its function is as follows. Substrate recognition component of a DCX (DDB1-CUL4-X-box) E3 protein ligase complex that mediates the ubiquitination and subsequent proteasomal degradation of target proteins, such as MEIS2, ILF2 or GLUL. Normal degradation of key regulatory proteins is required for normal limb outgrowth and expression of the fibroblast growth factor FGF8. Maintains presynaptic glutamate release and consequently, cognitive functions such as memory and learning, by negatively regulating large-conductance calcium-activated potassium (BK) channels in excitatory neurons. Likely to function by regulating the assembly and neuronal surface expression of BK channels via its interaction with KCNT1. May also be involved in regulating anxiety-like behaviors via a BK channel-independent mechanism. Plays a negative role in TLR4 signaling by interacting with TRAF6 and ECSIT, leading to inhibition of ECSIT ubiquitination, an important step of the signaling. The sequence is that of Protein cereblon (Crbn) from Mus musculus (Mouse).